Consider the following 537-residue polypeptide: Chaperonin GroEL (537 aa).

ATP contacts are provided by residues 29–32 (TLGP), 86–90 (DGTTT), Gly413, 477–479 (NAA), and Asp493.

This sequence belongs to the chaperonin (HSP60) family. Forms a cylinder of 14 subunits composed of two heptameric rings stacked back-to-back. Interacts with the co-chaperonin GroES.

The protein resides in the cytoplasm. It carries out the reaction ATP + H2O + a folded polypeptide = ADP + phosphate + an unfolded polypeptide.. In terms of biological role, together with its co-chaperonin GroES, plays an essential role in assisting protein folding. The GroEL-GroES system forms a nano-cage that allows encapsulation of the non-native substrate proteins and provides a physical environment optimized to promote and accelerate protein folding. The chain is Chaperonin GroEL from Bifidobacterium animalis subsp. lactis (strain AD011).